The sequence spans 446 residues: N-succinylarginine dihydrolase (446 aa).

Residues 19–28 (SGLSYGNVAS), N110, and 137–138 (HR) each bind substrate. Residue E174 is part of the active site. A substrate-binding site is contributed by R214. H250 is an active-site residue. Residues D252 and N363 each contribute to the substrate site. C369 acts as the Nucleophile in catalysis.

This sequence belongs to the succinylarginine dihydrolase family. As to quaternary structure, homodimer.

The enzyme catalyses N(2)-succinyl-L-arginine + 2 H2O + 2 H(+) = N(2)-succinyl-L-ornithine + 2 NH4(+) + CO2. It functions in the pathway amino-acid degradation; L-arginine degradation via AST pathway; L-glutamate and succinate from L-arginine: step 2/5. In terms of biological role, catalyzes the hydrolysis of N(2)-succinylarginine into N(2)-succinylornithine, ammonia and CO(2). The chain is N-succinylarginine dihydrolase from Hahella chejuensis (strain KCTC 2396).